The chain runs to 64 residues: Large ribosomal subunit protein bL32 (64 aa).

Over residues 1 to 10 the composition is skewed to basic residues; that stretch reads MAVPKRKTTP. The disordered stretch occupies residues 1–22; sequence MAVPKRKTTPSKRDMRRANHDK. Positions 11–22 are enriched in basic and acidic residues; sequence SKRDMRRANHDK.

It belongs to the bacterial ribosomal protein bL32 family.

In Sorangium cellulosum (strain So ce56) (Polyangium cellulosum (strain So ce56)), this protein is Large ribosomal subunit protein bL32.